The following is a 278-amino-acid chain: Tryptophan synthase alpha chain (278 aa).

Active-site proton acceptor residues include E61 and D72.

The protein belongs to the TrpA family. Tetramer of two alpha and two beta chains.

The enzyme catalyses (1S,2R)-1-C-(indol-3-yl)glycerol 3-phosphate + L-serine = D-glyceraldehyde 3-phosphate + L-tryptophan + H2O. It participates in amino-acid biosynthesis; L-tryptophan biosynthesis; L-tryptophan from chorismate: step 5/5. Functionally, the alpha subunit is responsible for the aldol cleavage of indoleglycerol phosphate to indole and glyceraldehyde 3-phosphate. The protein is Tryptophan synthase alpha chain of Shewanella oneidensis (strain ATCC 700550 / JCM 31522 / CIP 106686 / LMG 19005 / NCIMB 14063 / MR-1).